The chain runs to 481 residues: Flavonol 3-O-glucosyltransferase UGT71C1 (481 aa).

Catalysis depends on His-19, which acts as the Proton acceptor. Residue His-19 coordinates an anthocyanidin. The active-site Charge relay is the Asp-131. Residues Thr-153, Ala-352, Gln-354, His-369, Trp-372, Asn-373, Ser-374, and Glu-377 each contribute to the UDP-alpha-D-glucose site. Ala-392 contacts an anthocyanidin. 2 residues coordinate UDP-alpha-D-glucose: Glu-393 and Gln-394.

This sequence belongs to the UDP-glycosyltransferase family.

The catalysed reaction is a flavonol + UDP-alpha-D-glucose = a flavonol 3-O-beta-D-glucoside + UDP + H(+). It catalyses the reaction a 7-O-hydroxy-flavonol + UDP-alpha-D-glucose = a flavonol 7-O-beta-D-glucoside + UDP + H(+). Functionally, possesses quercetin 7-O-glucosyltransferase and 3'-O-glucosyltransferase activities in vitro. Also active in vitro on benzoates and benzoate derivatives. Glucosylates other secondary metabolites in vitro like trans-resveratrol, curcumin, vanillin and etoposide. In Arabidopsis thaliana (Mouse-ear cress), this protein is Flavonol 3-O-glucosyltransferase UGT71C1.